A 605-amino-acid chain; its full sequence is UvrABC system protein C (605 aa).

In terms of domain architecture, GIY-YIG spans 13 to 92 (SEPGVYLMKD…IKRYRPKYNV (80 aa)). In terms of domain architecture, UVR spans 205 to 240 (EKLMELLKEKMNESSMNFRFEEAAVYRDKIKSLEEM).

It belongs to the UvrC family. Interacts with UvrB in an incision complex.

It is found in the cytoplasm. The UvrABC repair system catalyzes the recognition and processing of DNA lesions. UvrC both incises the 5' and 3' sides of the lesion. The N-terminal half is responsible for the 3' incision and the C-terminal half is responsible for the 5' incision. This is UvrABC system protein C from Clostridioides difficile (strain 630) (Peptoclostridium difficile).